The sequence spans 436 residues: MSAKWERDSDASKGTLTFEIDVDTINKGIDEAFVETRKKITVPGFRKGRVPRQIFNQMYGEESLYQDALNKVLPDAYNEAVKETNIQPVDQPKIDIKSMEKGQPWVLTAEVDVMPEVKLGEYKGMEVPAQDTTVTDADVDDALETKRQQQAELVLKEDKPAEKGDTVVIDYKGSVDGEEFDGGSAENYSLELGSGSFIPGFEDQLIGHNADEDVDVNVTFPEDYHAKNLAGKDALFKVKIHEIKEKQLPELDDDFAKDVDEDVDTLAELKEKTKKQLQEEKDNQAKAAIEDAAINKAVANAEIQDIPQAMLDDDTNRQMQQYLAGMQQQGISPQMYFQITGTKEEDLKKQFANDAAQRVKTNLVLEAIVDDANLDATDEEIAKEISDLAKQYGMEEDAVKKALSKDMLMHDIKIRKAVDLVADSAKQVKDDEKSDK.

Positions 164–249 constitute a PPIase FKBP-type domain; it reads GDTVVIDYKG…IHEIKEKQLP (86 aa).

The protein belongs to the FKBP-type PPIase family. Tig subfamily.

It is found in the cytoplasm. It catalyses the reaction [protein]-peptidylproline (omega=180) = [protein]-peptidylproline (omega=0). Its function is as follows. Involved in protein export. Acts as a chaperone by maintaining the newly synthesized protein in an open conformation. Functions as a peptidyl-prolyl cis-trans isomerase. In Limosilactobacillus reuteri (strain DSM 20016) (Lactobacillus reuteri), this protein is Trigger factor.